The sequence spans 309 residues: MKRKIIVGSRRSKLALTQSNWVINKLKENYPEFDFEIKEIVTKGDRILDVTLSKVGGKGLFVSEVEQALSDEAIDFAVHSMKDVPSSLKEGLIIGAIPKRESPLDCFVFNQVNSLDELPQGSVIGTSSLRRAAQLLKHRPDFVIKPIRGNIDTRLQKLHAENFDAIILAKAGLARMGWLENTTLKLEDIPPEVCLPAVGQGALAIECRESDQQIRDMLTSIHHEETGICVEAERVFLKKLNGGCEIPIAGFATRANEFVQFKGLVGNADGSIILESEQVGANPSEIGNKVAEDLLSEGADTIIKELRNV.

The residue at position 244 (C244) is an S-(dipyrrolylmethanemethyl)cysteine.

It belongs to the HMBS family. Monomer. Requires dipyrromethane as cofactor.

The enzyme catalyses 4 porphobilinogen + H2O = hydroxymethylbilane + 4 NH4(+). The protein operates within porphyrin-containing compound metabolism; protoporphyrin-IX biosynthesis; coproporphyrinogen-III from 5-aminolevulinate: step 2/4. Functionally, tetrapolymerization of the monopyrrole PBG into the hydroxymethylbilane pre-uroporphyrinogen in several discrete steps. The sequence is that of Porphobilinogen deaminase from Listeria monocytogenes serovar 1/2a (strain ATCC BAA-679 / EGD-e).